The chain runs to 276 residues: Small ribosomal subunit protein uS5w (276 aa).

Residues 1-15 are compositionally biased toward basic and acidic residues; sequence MAERGVERGGDRGDF. Positions 1–42 are disordered; the sequence is MAERGVERGGDRGDFGRGFGGRGGGRGGPRGRGRRAGRAPEE. Residues 16-28 show a composition bias toward gly residues; it reads GRGFGGRGGGRGG. The S5 DRBM domain occupies 87-150; that stretch reads LKDEVMKIMP…ILAKLSVVPI (64 aa).

The protein belongs to the universal ribosomal protein uS5 family.

This Arabidopsis thaliana (Mouse-ear cress) protein is Small ribosomal subunit protein uS5w (RPS2D).